The chain runs to 276 residues: Bis(5'-nucleosyl)-tetraphosphatase, symmetrical (276 aa).

It belongs to the Ap4A hydrolase family.

The catalysed reaction is P(1),P(4)-bis(5'-adenosyl) tetraphosphate + H2O = 2 ADP + 2 H(+). Hydrolyzes diadenosine 5',5'''-P1,P4-tetraphosphate to yield ADP. In Psychromonas ingrahamii (strain DSM 17664 / CCUG 51855 / 37), this protein is Bis(5'-nucleosyl)-tetraphosphatase, symmetrical.